The following is a 289-amino-acid chain: Glycine--tRNA ligase alpha subunit (289 aa).

Belongs to the class-II aminoacyl-tRNA synthetase family. As to quaternary structure, tetramer of two alpha and two beta subunits.

It is found in the cytoplasm. The enzyme catalyses tRNA(Gly) + glycine + ATP = glycyl-tRNA(Gly) + AMP + diphosphate. This chain is Glycine--tRNA ligase alpha subunit, found in Prochlorococcus marinus subsp. pastoris (strain CCMP1986 / NIES-2087 / MED4).